Consider the following 147-residue polypeptide: Small ribosomal subunit protein bS6m (147 aa).

The protein belongs to the bacterial ribosomal protein bS6 family. In terms of assembly, component of the mitochondrial ribosome small subunit (28S) which comprises a 12S rRNA and about 30 distinct proteins.

The protein resides in the mitochondrion. The chain is Small ribosomal subunit protein bS6m (mRpS6) from Drosophila melanogaster (Fruit fly).